A 1935-amino-acid chain; its full sequence is Myosin-7 (1935 aa).

The Myosin N-terminal SH3-like domain occupies 32-81; the sequence is DLKKDVFVPDDKEEFVKAKIISREGGKITAETEHGKTVTVKEDQVLQQNP. The Myosin motor domain occupies 85 to 778; the sequence is DKIEDMAMLT…LLGLLEEMRD (694 aa). Position 129 is an N6,N6,N6-trimethyllysine (K129). An ATP-binding site is contributed by 178 to 185; sequence GESGAGKT. T378 is subject to Phosphothreonine. Actin-binding stretches follow at residues 655-677 and 757-771; these read LNKLMTNLRSTHPHFVRCIIPNE and RFGHTKVFFKAGLLG. An IQ domain is found at 781-810; the sequence is LSRIITRIQAQSRGVLARMEFKKLLERRDS. A coiled-coil region spans residues 839 to 1935; that stretch reads LLKSAETEKE…DIGTKGLNEE (1097 aa). Phosphoserine is present on residues S1137 and S1269. A Phosphothreonine modification is found at T1282. Position 1308 is a phosphotyrosine (Y1308). Position 1309 is a phosphothreonine (T1309). S1510 is modified (phosphoserine). At T1513 the chain carries Phosphothreonine. Residues 1907 to 1935 are disordered; the sequence is EERADIAESQVNKLRAKSRDIGTKGLNEE. Residues 1923-1935 show a composition bias toward basic and acidic residues; sequence KSRDIGTKGLNEE.

Belongs to the TRAFAC class myosin-kinesin ATPase superfamily. Myosin family. In terms of assembly, muscle myosin is a hexameric protein that consists of 2 heavy chain subunits (MHC), 2 alkali light chain subunits (MLC) and 2 regulatory light chain subunits (MLC-2). Interacts with ECPAS. Interacts (via C-terminus) with LRRC39.

Its subcellular location is the cytoplasm. The protein localises to the myofibril. The protein resides in the sarcomere. In terms of biological role, myosins are actin-based motor molecules with ATPase activity essential for muscle contraction. Forms regular bipolar thick filaments that, together with actin thin filaments, constitute the fundamental contractile unit of skeletal and cardiac muscle. The chain is Myosin-7 (MYH7) from Equus caballus (Horse).